The sequence spans 257 residues: Phosphate import ATP-binding protein PstB (257 aa).

The region spanning 5–246 (LEIKDLTAFY…EVIFTSPKNE (242 aa)) is the ABC transporter domain. Position 37-44 (37-44 (GPSGCGKS)) interacts with ATP.

The protein belongs to the ABC transporter superfamily. Phosphate importer (TC 3.A.1.7) family. As to quaternary structure, the complex is composed of two ATP-binding proteins (PstB), two transmembrane proteins (PstC and PstA) and a solute-binding protein (PstS).

It localises to the cell membrane. It carries out the reaction phosphate(out) + ATP + H2O = ADP + 2 phosphate(in) + H(+). In terms of biological role, part of the ABC transporter complex PstSACB involved in phosphate import. Responsible for energy coupling to the transport system. The chain is Phosphate import ATP-binding protein PstB from Tropheryma whipplei (strain Twist) (Whipple's bacillus).